The primary structure comprises 259 residues: ATP synthase subunit b 2 (259 aa).

The helical transmembrane segment at 5-27 threads the bilayer; sequence WFTVSAQAINFLILVALLKRFLY.

This sequence belongs to the ATPase B chain family. As to quaternary structure, F-type ATPases have 2 components, F(1) - the catalytic core - and F(0) - the membrane proton channel. F(1) has five subunits: alpha(3), beta(3), gamma(1), delta(1), epsilon(1). F(0) has three main subunits: a(1), b(2) and c(10-14). The alpha and beta chains form an alternating ring which encloses part of the gamma chain. F(1) is attached to F(0) by a central stalk formed by the gamma and epsilon chains, while a peripheral stalk is formed by the delta and b chains.

The protein resides in the cell inner membrane. Its function is as follows. F(1)F(0) ATP synthase produces ATP from ADP in the presence of a proton or sodium gradient. F-type ATPases consist of two structural domains, F(1) containing the extramembraneous catalytic core and F(0) containing the membrane proton channel, linked together by a central stalk and a peripheral stalk. During catalysis, ATP synthesis in the catalytic domain of F(1) is coupled via a rotary mechanism of the central stalk subunits to proton translocation. In terms of biological role, component of the F(0) channel, it forms part of the peripheral stalk, linking F(1) to F(0). The polypeptide is ATP synthase subunit b 2 (Syntrophotalea carbinolica (strain DSM 2380 / NBRC 103641 / GraBd1) (Pelobacter carbinolicus)).